Here is a 301-residue protein sequence, read N- to C-terminus: MKIAVLSRNPRLYSTRRLVEAGTQRGHEMVVIDTLRAYMNIASHKPQIHYRGKPLEGFDAVIPRIGASVTFYGCAVLRQFEMMGVYPLNESVAIARSRDKLRSLQLLSRRGIGLPITGFAHSPDDIPDLIQMVNGAPLVIKVLEGTQGIGVVLCETTQAAESVIEAFMGLKQNIMVQEYIKEAGGADIRCFVVGDKVIASMKRQAKPGEFRSNLHRGGVASLIKITPEERITAIRAAKVMGLSVAGVDILRSNHGPLVMEVNSSPGLEGIEVTTGKNVAGMIIEHLEKNGGPNQTRTKGKG.

The region spanning 104–287 (LQLLSRRGIG…VAGMIIEHLE (184 aa)) is the ATP-grasp domain. Residues lysine 141, 178–179 (EY), aspartate 187, and 211–213 (RSN) contribute to the ATP site. Residues aspartate 248, glutamate 260, and asparagine 262 each coordinate Mg(2+). Residues aspartate 248, glutamate 260, and asparagine 262 each coordinate Mn(2+).

Belongs to the RimK family. Mg(2+) serves as cofactor. The cofactor is Mn(2+).

This chain is Probable alpha-L-glutamate ligase, found in Pseudomonas putida (strain W619).